The following is a 452-amino-acid chain: Disintegrin and metalloproteinase domain-containing protein 11 (452 aa).

Positions arginine 1 to proline 120 constitute a Peptidase M12B domain. At arginine 1 to asparagine 417 the chain is on the extracellular side. Intrachain disulfides connect cysteine 31/cysteine 115, cysteine 74/cysteine 99, and cysteine 76/cysteine 83. Residues proline 126–aspartate 214 enclose the Disintegrin domain. N-linked (GlcNAc...) asparagine glycosylation occurs at asparagine 149. Cysteine 186 and cysteine 206 are oxidised to a cystine. N-linked (GlcNAc...) asparagine glycosylation is found at asparagine 288 and asparagine 356. Cystine bridges form between cysteine 360–cysteine 375, cysteine 369–cysteine 381, and cysteine 383–cysteine 392. Residues cysteine 360–threonine 416 form the EGF-like domain. A helical membrane pass occupies residues isoleucine 418–glycine 438. At tryptophan 439 to glycine 452 the chain is on the cytoplasmic side.

In terms of processing, the precursor is cleaved by a furin endopeptidase. Detected in testis and barely expressed in heart and muscle. Not detectable in liver.

It localises to the presynaptic cell membrane. The protein localises to the perikaryon. It is found in the cell projection. The protein resides in the axon. In terms of biological role, probable ligand for integrin in the brain. This is a non-catalytic metalloprotease-like protein. The chain is Disintegrin and metalloproteinase domain-containing protein 11 (adam11) from Xenopus laevis (African clawed frog).